The sequence spans 402 residues: MTEALGTVTPGMRNFTINFGPQHPAAHGVLRLVLELDGEVVERVDPHIGLLHRGTEKLIEQKTYLQAIPYFDRLDYVAPMNQEHAFCLAAERLLGIAVPRRGQLIRVLYCEIGRILSHLLNVTTQAMDVGALTPPLWGFEEREKLMMFYERASGSRMHAAYFRIGGVHQDLPPRLIDDIEAWCDPFLQVVADLDRLLTANRIFKQRNVDIGVVTLEQAWEWGFSGVMVRGSGAAWDLRKAQPYECYAEMDFDIPIGKNGDCYDRYLIRMEEMRQSVRIMKQCIAKLRAPDGQGPVAVEDNKIFPPRRGEMKRSMEALIHHFKLYTEGFHVPAGEIYAAVEAPKGEFGVYLVSDGSNKPYKCKIRAPGFAHLQAMDFICRGHLLADVSAILGSLDIVFGEVDR.

The protein belongs to the complex I 49 kDa subunit family. As to quaternary structure, NDH-1 is composed of 14 different subunits. Subunits NuoB, C, D, E, F, and G constitute the peripheral sector of the complex.

It localises to the cell inner membrane. It carries out the reaction a quinone + NADH + 5 H(+)(in) = a quinol + NAD(+) + 4 H(+)(out). Functionally, NDH-1 shuttles electrons from NADH, via FMN and iron-sulfur (Fe-S) centers, to quinones in the respiratory chain. The immediate electron acceptor for the enzyme in this species is believed to be ubiquinone. Couples the redox reaction to proton translocation (for every two electrons transferred, four hydrogen ions are translocated across the cytoplasmic membrane), and thus conserves the redox energy in a proton gradient. The polypeptide is NADH-quinone oxidoreductase subunit D (Nitrobacter winogradskyi (strain ATCC 25391 / DSM 10237 / CIP 104748 / NCIMB 11846 / Nb-255)).